Here is a 223-residue protein sequence, read N- to C-terminus: Small ribosomal subunit protein uS3 (223 aa).

One can recognise a KH type-2 domain in the interval 39 to 108 (IRNFVKKNSY…NILINIVEVK (70 aa)).

This sequence belongs to the universal ribosomal protein uS3 family. Part of the 30S ribosomal subunit. Forms a tight complex with proteins S10 and S14.

In terms of biological role, binds the lower part of the 30S subunit head. Binds mRNA in the 70S ribosome, positioning it for translation. The protein is Small ribosomal subunit protein uS3 of Clostridium botulinum (strain Okra / Type B1).